Consider the following 91-residue polypeptide: UPF0358 protein Sca_0738 (91 aa).

It belongs to the UPF0358 family.

This chain is UPF0358 protein Sca_0738, found in Staphylococcus carnosus (strain TM300).